The sequence spans 168 residues: Cell division inhibitor SulA (168 aa).

Residues 106-112 are ftsZ binding; it reads ALLTGNY. The tract at residues 161–168 is lon protease binding; that stretch reads KIHSSLYH.

The protein belongs to the SulA family. In terms of assembly, interacts with FtsZ. Post-translationally, is rapidly cleaved and degraded by the Lon protease once DNA damage is repaired.

Functionally, component of the SOS system and an inhibitor of cell division. Accumulation of SulA causes rapid cessation of cell division and the appearance of long, non-septate filaments. In the presence of GTP, binds a polymerization-competent form of FtsZ in a 1:1 ratio, thus inhibiting FtsZ polymerization and therefore preventing it from participating in the assembly of the Z ring. This mechanism prevents the premature segregation of damaged DNA to daughter cells during cell division. This Yersinia enterocolitica serotype O:8 / biotype 1B (strain NCTC 13174 / 8081) protein is Cell division inhibitor SulA.